The following is a 440-amino-acid chain: Protein TENP (440 aa).

Expressed in developing retina and brain, but not in heart, liver or kidney. In brain, located in a narrow strip in the boundary between the ventricular zone (consisting of proliferating cells) and the intermediate zone (consisting of postmitotic, differentiating cells). Expressed in all major regions of the developing brain, including the myelencephalon, the mesencephalon, the telencephalon and the diencephalon. In the developing retina, expression is scattered across the retinal neural epithelium. Expressed in egg white (at protein level). Expressed in the magnum of the oviduct (at protein level).

In terms of biological role, may play a role in the developmental transition from cell proliferation to cell differentiation during neurogenesis. In Gallus gallus (Chicken), this protein is Protein TENP (TENP).